A 285-amino-acid chain; its full sequence is Glycine--tRNA ligase alpha subunit (285 aa).

It belongs to the class-II aminoacyl-tRNA synthetase family. As to quaternary structure, tetramer of two alpha and two beta subunits.

Its subcellular location is the cytoplasm. It catalyses the reaction tRNA(Gly) + glycine + ATP = glycyl-tRNA(Gly) + AMP + diphosphate. This chain is Glycine--tRNA ligase alpha subunit, found in Thermodesulfovibrio yellowstonii (strain ATCC 51303 / DSM 11347 / YP87).